A 110-amino-acid chain; its full sequence is Nucleoid-associated protein Mvan_5528 (110 aa).

It belongs to the YbaB/EbfC family. As to quaternary structure, homodimer.

The protein resides in the cytoplasm. It localises to the nucleoid. Functionally, binds to DNA and alters its conformation. May be involved in regulation of gene expression, nucleoid organization and DNA protection. This chain is Nucleoid-associated protein Mvan_5528, found in Mycolicibacterium vanbaalenii (strain DSM 7251 / JCM 13017 / BCRC 16820 / KCTC 9966 / NRRL B-24157 / PYR-1) (Mycobacterium vanbaalenii).